A 599-amino-acid chain; its full sequence is Subtilisin-like protease 1 (599 aa).

The signal sequence occupies residues 1 to 20 (MRTVFIYACIISLVLRTIPA). Positions 21–195 (HNDLMSKEKE…VESDELVGAD (175 aa)) are cleaved as a propeptide — inhibition peptide. N-linked (GlcNAc...) asparagine glycosylation occurs at Asn-57. The stretch at 74 to 101 (EDAPKEELNKIEMEKKKAEEEAKNSKKK) forms a coiled coil. Ca(2+) is bound by residues Asn-123, Thr-126, Pro-128, and Gly-183. The N-linked (GlcNAc...) asparagine glycan is linked to Asn-227. Asp-251 provides a ligand contact to Ca(2+). Positions 257–574 (QWGLDLARLD…GGYIDILNAV (318 aa)) constitute a Peptidase S8 domain. 2 disulfide bridges follow: Cys-283–Cys-393 and Cys-372–Cys-389. Asp-286 acts as the Charge relay system in catalysis. The Ca(2+) site is built by Asp-295, Glu-306, Asp-314, Asp-315, Asp-316, Asn-318, Ile-320, Asp-322, and Asp-323. The N-linked (GlcNAc...) asparagine glycan is linked to Asn-331. The Charge relay system role is filled by His-342. Position 353 (Ile-353) interacts with Ca(2+). A glycan (N-linked (GlcNAc...) asparagine) is linked at Asn-355. Ca(2+) contacts are provided by Asn-356, Ile-358, and Val-360. N-linked (GlcNAc...) asparagine glycosylation is found at Asn-402 and Asn-434. A disulfide bridge connects residues Cys-435 and Cys-448. The Charge relay system role is filled by Ser-519.

This sequence belongs to the peptidase S8 family. Post-translationally, the N-terminal prodomain is cleaved.

The protein localises to the secreted. The protein resides in the parasitophorous vacuole lumen. It is found in the cytoplasmic vesicle. It localises to the secretory vesicle. The catalysed reaction is Hydrolysis of proteins with broad specificity for peptide bonds, and a preference for a large uncharged residue in P1. Hydrolyzes peptide amides.. Mediates the proteolytic maturation of serine protease SERA3. Mediates the proteolytic maturation of MSP1, and thereby may prime the parasite cell surface for invasion of fresh erythrocytes. Required for completion of the parasite pre-erythrocytic stages. Required for hepatic schizont development and merozoite formation. Required for the egress of the hepatic merozoites from the parasitophorous vacuole. Required for parasite infectivity during blood stages. Required for male gamete egress. The chain is Subtilisin-like protease 1 from Plasmodium berghei (strain Anka).